The sequence spans 113 residues: Large ribosomal subunit protein P2 (113 aa).

A disordered region spans residues 62–113; the sequence is LASVPSGGAGGAAASGGAAAAGGSAQAEAAPEAAKEEEKEESDEDMGFGLFD. The segment covering 76–93 has biased composition (low complexity); that stretch reads SGGAAAAGGSAQAEAAPE. Position 103 is a phosphoserine (Ser103).

This sequence belongs to the eukaryotic ribosomal protein P1/P2 family. P1 and P2 exist as dimers at the large ribosomal subunit.

Its function is as follows. Plays an important role in the elongation step of protein synthesis. This Alternaria alternata (Alternaria rot fungus) protein is Large ribosomal subunit protein P2 (ALTA5).